The primary structure comprises 601 residues: Elongation factor 4 (601 aa).

One can recognise a tr-type G domain in the interval 7 to 189; it reads DTIRNFSIVA…AIVAKLPPPK (183 aa). GTP-binding positions include 19–24 and 136–139; these read DHGKST and NKID.

The protein belongs to the TRAFAC class translation factor GTPase superfamily. Classic translation factor GTPase family. LepA subfamily.

It is found in the cell inner membrane. It catalyses the reaction GTP + H2O = GDP + phosphate + H(+). Required for accurate and efficient protein synthesis under certain stress conditions. May act as a fidelity factor of the translation reaction, by catalyzing a one-codon backward translocation of tRNAs on improperly translocated ribosomes. Back-translocation proceeds from a post-translocation (POST) complex to a pre-translocation (PRE) complex, thus giving elongation factor G a second chance to translocate the tRNAs correctly. Binds to ribosomes in a GTP-dependent manner. The protein is Elongation factor 4 of Methylobacterium sp. (strain 4-46).